We begin with the raw amino-acid sequence, 205 residues long: Thymidine kinase (205 aa).

ATP contacts are provided by residues 9–16 and 87–90; these read SAMNAGKS and DESQ. Catalysis depends on glutamate 88, which acts as the Proton acceptor. Residues cysteine 145, cysteine 147, cysteine 182, and histidine 185 each contribute to the Zn(2+) site.

The protein belongs to the thymidine kinase family. As to quaternary structure, homotetramer.

The protein localises to the cytoplasm. It catalyses the reaction thymidine + ATP = dTMP + ADP + H(+). The sequence is that of Thymidine kinase from Salmonella choleraesuis (strain SC-B67).